The sequence spans 252 residues: PHD finger protein ALFIN-LIKE 7 (252 aa).

Residues alanine 141–glutamate 193 are disordered. The segment covering alanine 149–glycine 161 has biased composition (low complexity). Serine 176 is modified (phosphoserine). Positions glutamate 184–glutamate 193 are enriched in acidic residues. Residues glycine 195–serine 247 form a PHD-type zinc finger.

This sequence belongs to the Alfin family. In terms of assembly, interacts with H3K4me3 and to a lesser extent with H3K4me2. As to expression, ubiquitously expressed.

The protein localises to the nucleus. In terms of biological role, histone-binding component that specifically recognizes H3 tails trimethylated on 'Lys-4' (H3K4me3), which mark transcription start sites of virtually all active genes. The polypeptide is PHD finger protein ALFIN-LIKE 7 (AL7) (Arabidopsis thaliana (Mouse-ear cress)).